Consider the following 223-residue polypeptide: Thiopurine S-methyltransferase (223 aa).

S-adenosyl-L-methionine contacts are provided by Trp10, Leu45, Glu66, and Arg127.

This sequence belongs to the class I-like SAM-binding methyltransferase superfamily. TPMT family.

It localises to the cytoplasm. It carries out the reaction S-adenosyl-L-methionine + a thiopurine = S-adenosyl-L-homocysteine + a thiopurine S-methylether.. The protein is Thiopurine S-methyltransferase of Shewanella woodyi (strain ATCC 51908 / MS32).